The following is a 166-amino-acid chain: 3-dehydroquinate dehydratase (166 aa).

Catalysis depends on Y22, which acts as the Proton acceptor. 3 residues coordinate substrate: N73, H79, and D86. Residue H99 is the Proton donor of the active site. Substrate contacts are provided by residues 100 to 101 and R110; that span reads IT.

Belongs to the type-II 3-dehydroquinase family. Homododecamer.

The catalysed reaction is 3-dehydroquinate = 3-dehydroshikimate + H2O. It functions in the pathway metabolic intermediate biosynthesis; chorismate biosynthesis; chorismate from D-erythrose 4-phosphate and phosphoenolpyruvate: step 3/7. In terms of biological role, catalyzes a trans-dehydration via an enolate intermediate. In Wolinella succinogenes (strain ATCC 29543 / DSM 1740 / CCUG 13145 / JCM 31913 / LMG 7466 / NCTC 11488 / FDC 602W) (Vibrio succinogenes), this protein is 3-dehydroquinate dehydratase.